A 173-amino-acid polypeptide reads, in one-letter code: uncharacterized protein (173 aa).

A disordered region spans residues 80–107; it reads HSATVKRTDSSHRLKSHVVDKRPRRSLD. Residues 85–107 are compositionally biased toward basic and acidic residues; that stretch reads KRTDSSHRLKSHVVDKRPRRSLD.

This is an uncharacterized protein from Autographa californica nuclear polyhedrosis virus (AcMNPV).